The chain runs to 472 residues: Major capsid protein (472 aa).

Belongs to the phi29 phage major capsid protein family.

Its subcellular location is the virion. Assembles to form a prolate capsid of about 45x54 nm, with a T=3, Q=5 symmetry. The chain is Major capsid protein (8) from Bacillus phage GA-1 (Bacteriophage GA-1).